The following is an 81-amino-acid chain: A-kinase anchor protein 7 isoform alpha (81 aa).

Gly2 carries N-myristoyl glycine lipidation. Positions 2-11 (GQLCCFPFAR) are required for membrane localization. S-palmitoyl cysteine attachment occurs at residues Cys5 and Cys6. An RII-binding region spans residues 29-42 (LVRLSKRLVENAVL). The segment at 49 to 81 (LEETQNKKQPGEGNSTKAEEGDRNGDGSDNNRK) is disordered. Residues 65–81 (KAEEGDRNGDGSDNNRK) are compositionally biased toward basic and acidic residues.

Binds cAMP-dependent protein kinase (PKA). Interacts with PRKCA; only the cytoplasmic form is capable of interacting with PRKCA.

The protein resides in the lateral cell membrane. In terms of biological role, targets the cAMP-dependent protein kinase (PKA) to the plasma membrane, and permits functional coupling to the L-type calcium channel. The membrane-associated form reduces epithelial sodium channel (ENaC) activity, whereas the free cytoplasmic form may negatively regulate ENaC channel feedback inhibition by intracellular sodium. This Mus musculus (Mouse) protein is A-kinase anchor protein 7 isoform alpha (Akap7).